The sequence spans 244 residues: Ferric aerobactin reductase IutB (244 aa).

Positions 220, 221, 232, and 235 each coordinate [2Fe-2S] cluster.

Monomer. [2Fe-2S] cluster is required as a cofactor.

It localises to the cytoplasm. The enzyme catalyses 2 a Fe(II)-siderophore + NAD(+) + H(+) = 2 a Fe(III)-siderophore + NADH. It carries out the reaction 2 a Fe(II)-siderophore + NADP(+) + H(+) = 2 a Fe(III)-siderophore + NADPH. In terms of biological role, ferric-siderophore reductase involved in iron removal from the siderophores after their transport into the cell. Acts as a major ferric-aerobactin reductase catalyzing the reduction of Fe(3+)-aerobactin, a citrate-hydroxamate siderophore produced by other bacteria. Catalyzes reduction of Fe(3+)-vulnibactin, a catecholate siderophore synthesized by V.vulnificus, in the absence of VuuB. Catalyzes reduction of ferrioxamine B and Fe(3+)-vibriobactin in vitro. No activity with Fe(3+)-enterobactin. Catalyzes reduction of ferric chelating compound Fe(3+)-nitrilotriacetic acid (NTA) in the presence of NADH, NADPH or reduced glutathione (GSH) as its electron donor in vitro. Also catalyzes reduction of ferric chelating compounds Fe(3+)-citrate and Fe(3+)-EDTA as well as non-complexed FeCl3 in the presence of GSH as its electron donor in vitro. Highest activity with Fe(3+)-NTA as electron acceptor and GSH as donor. The chain is Ferric aerobactin reductase IutB from Vibrio vulnificus.